We begin with the raw amino-acid sequence, 159 residues long: MKITILAVGKLKEKYWKQAIAEYEKRLGPYTKIDIIEVTDEKAPENMSDKEIEQVKEKEGQRILAKIKPQSTVITLEIQGKMLSSEGLAQELNQRMTQGQSDFVFVIGGSNGLHKDVLQRSNYALSFSKMTFPHQMMRVVLIEQVYRAFKIMRGEAYHK.

S-adenosyl-L-methionine contacts are provided by residues Leu76, Gly108, and 127–132 (FSKMTF).

Belongs to the RNA methyltransferase RlmH family. Homodimer.

Its subcellular location is the cytoplasm. The enzyme catalyses pseudouridine(1915) in 23S rRNA + S-adenosyl-L-methionine = N(3)-methylpseudouridine(1915) in 23S rRNA + S-adenosyl-L-homocysteine + H(+). Functionally, specifically methylates the pseudouridine at position 1915 (m3Psi1915) in 23S rRNA. This Staphylococcus aureus (strain MSSA476) protein is Ribosomal RNA large subunit methyltransferase H.